Reading from the N-terminus, the 574-residue chain is Proline--tRNA ligase (574 aa).

The protein belongs to the class-II aminoacyl-tRNA synthetase family. ProS type 1 subfamily. In terms of assembly, homodimer.

The protein localises to the cytoplasm. It catalyses the reaction tRNA(Pro) + L-proline + ATP = L-prolyl-tRNA(Pro) + AMP + diphosphate. Catalyzes the attachment of proline to tRNA(Pro) in a two-step reaction: proline is first activated by ATP to form Pro-AMP and then transferred to the acceptor end of tRNA(Pro). As ProRS can inadvertently accommodate and process non-cognate amino acids such as alanine and cysteine, to avoid such errors it has two additional distinct editing activities against alanine. One activity is designated as 'pretransfer' editing and involves the tRNA(Pro)-independent hydrolysis of activated Ala-AMP. The other activity is designated 'posttransfer' editing and involves deacylation of mischarged Ala-tRNA(Pro). The misacylated Cys-tRNA(Pro) is not edited by ProRS. In Oleidesulfovibrio alaskensis (strain ATCC BAA-1058 / DSM 17464 / G20) (Desulfovibrio alaskensis), this protein is Proline--tRNA ligase.